The following is a 427-amino-acid chain: Trigger factor (427 aa).

Residues G163–P248 enclose the PPIase FKBP-type domain.

The protein belongs to the FKBP-type PPIase family. Tig subfamily.

It localises to the cytoplasm. It carries out the reaction [protein]-peptidylproline (omega=180) = [protein]-peptidylproline (omega=0). In terms of biological role, involved in protein export. Acts as a chaperone by maintaining the newly synthesized protein in an open conformation. Functions as a peptidyl-prolyl cis-trans isomerase. The protein is Trigger factor of Streptococcus mutans serotype c (strain ATCC 700610 / UA159).